The primary structure comprises 338 residues: Elongation factor Ts, mitochondrial (338 aa).

A mitochondrion-targeting transit peptide spans 1-55 (MSLLRSLRLCLVARTGSCPLSALGPGPLLPSLQAGLPLLQSPQQWHTFHSGSWLS). N6-succinyllysine occurs at positions 89, 146, and 205. Ser-283 is subject to Phosphoserine.

Belongs to the EF-Ts family.

Its subcellular location is the mitochondrion. Its function is as follows. Associates with the EF-Tu.GDP complex and induces the exchange of GDP to GTP. It remains bound to the aminoacyl-tRNA.EF-Tu.GTP complex up to the GTP hydrolysis stage on the ribosome. This Bos taurus (Bovine) protein is Elongation factor Ts, mitochondrial.